A 177-amino-acid chain; its full sequence is Large ribosomal subunit protein uL6 (177 aa).

Belongs to the universal ribosomal protein uL6 family. In terms of assembly, part of the 50S ribosomal subunit.

This protein binds to the 23S rRNA, and is important in its secondary structure. It is located near the subunit interface in the base of the L7/L12 stalk, and near the tRNA binding site of the peptidyltransferase center. This is Large ribosomal subunit protein uL6 from Pseudomonas putida (strain ATCC 700007 / DSM 6899 / JCM 31910 / BCRC 17059 / LMG 24140 / F1).